Consider the following 272-residue polypeptide: 2-succinyl-6-hydroxy-2,4-cyclohexadiene-1-carboxylate synthase (272 aa).

It belongs to the AB hydrolase superfamily. MenH family. In terms of assembly, monomer.

The enzyme catalyses 5-enolpyruvoyl-6-hydroxy-2-succinyl-cyclohex-3-ene-1-carboxylate = (1R,6R)-6-hydroxy-2-succinyl-cyclohexa-2,4-diene-1-carboxylate + pyruvate. Its pathway is quinol/quinone metabolism; 1,4-dihydroxy-2-naphthoate biosynthesis; 1,4-dihydroxy-2-naphthoate from chorismate: step 3/7. The protein operates within quinol/quinone metabolism; menaquinone biosynthesis. In terms of biological role, catalyzes a proton abstraction reaction that results in 2,5-elimination of pyruvate from 2-succinyl-5-enolpyruvyl-6-hydroxy-3-cyclohexene-1-carboxylate (SEPHCHC) and the formation of 2-succinyl-6-hydroxy-2,4-cyclohexadiene-1-carboxylate (SHCHC). In Yersinia pestis bv. Antiqua (strain Nepal516), this protein is 2-succinyl-6-hydroxy-2,4-cyclohexadiene-1-carboxylate synthase.